Here is a 457-residue protein sequence, read N- to C-terminus: Ribosomal protein uS12 methylthiotransferase RimO (457 aa).

Residues 30-140 (PTIGMVSLGC…VLDAVHGAVP (111 aa)) form the MTTase N-terminal domain. Positions 39, 75, 104, 171, 175, and 178 each coordinate [4Fe-4S] cluster. The 230-residue stretch at 157–386 (LTPRHFSYLK…MQKAQAISEA (230 aa)) folds into the Radical SAM core domain. Residues 389–456 (AARIGQRLEV…EYDLWGRAVL (68 aa)) enclose the TRAM domain.

It belongs to the methylthiotransferase family. RimO subfamily. The cofactor is [4Fe-4S] cluster.

Its subcellular location is the cytoplasm. It catalyses the reaction L-aspartate(89)-[ribosomal protein uS12]-hydrogen + (sulfur carrier)-SH + AH2 + 2 S-adenosyl-L-methionine = 3-methylsulfanyl-L-aspartate(89)-[ribosomal protein uS12]-hydrogen + (sulfur carrier)-H + 5'-deoxyadenosine + L-methionine + A + S-adenosyl-L-homocysteine + 2 H(+). Functionally, catalyzes the methylthiolation of an aspartic acid residue of ribosomal protein uS12. The chain is Ribosomal protein uS12 methylthiotransferase RimO from Cereibacter sphaeroides (strain ATCC 17025 / ATH 2.4.3) (Rhodobacter sphaeroides).